Here is a 291-residue protein sequence, read N- to C-terminus: Elongation factor Ts (291 aa).

The involved in Mg(2+) ion dislocation from EF-Tu stretch occupies residues 81–84; the sequence is TDFV. The interval 271–291 is disordered; the sequence is EGKEKKDESFADEVMAQVRDS.

It belongs to the EF-Ts family.

The protein resides in the cytoplasm. In terms of biological role, associates with the EF-Tu.GDP complex and induces the exchange of GDP to GTP. It remains bound to the aminoacyl-tRNA.EF-Tu.GTP complex up to the GTP hydrolysis stage on the ribosome. This Halorhodospira halophila (strain DSM 244 / SL1) (Ectothiorhodospira halophila (strain DSM 244 / SL1)) protein is Elongation factor Ts.